A 430-amino-acid chain; its full sequence is Protein translocase subunit SecY (430 aa).

Transmembrane regions (helical) follow at residues 18 to 38 (IFFTLAMLVIFKIGTYIPAPG), 68 to 88 (FSIFAMGIVPYITASIVMQLL), 117 to 137 (LAISLAFIQSIGMAFQFNNYL), 147 to 167 (IMSYLLIALVLTAGTAFLIWL), 179 to 199 (GISIIIFAGILSTLPASLIQF), 217 to 237 (VLGLLVSLILLTVGAIYVLEA), 269 to 289 (GVIPVIFAMAFFLLPRTLTLF), 308 to 328 (NVGMVVYIVLIILFTYFYAFV), 368 to 388 (FVGSIFLAVISILPILATKFM), and 389 to 409 (GLPQSIQIGGTSLLIVIGVAI).

The protein belongs to the SecY/SEC61-alpha family. As to quaternary structure, component of the Sec protein translocase complex. Heterotrimer consisting of SecY, SecE and SecG subunits. The heterotrimers can form oligomers, although 1 heterotrimer is thought to be able to translocate proteins. Interacts with the ribosome. Interacts with SecDF, and other proteins may be involved. Interacts with SecA.

It localises to the cell membrane. In terms of biological role, the central subunit of the protein translocation channel SecYEG. Consists of two halves formed by TMs 1-5 and 6-10. These two domains form a lateral gate at the front which open onto the bilayer between TMs 2 and 7, and are clamped together by SecE at the back. The channel is closed by both a pore ring composed of hydrophobic SecY resides and a short helix (helix 2A) on the extracellular side of the membrane which forms a plug. The plug probably moves laterally to allow the channel to open. The ring and the pore may move independently. In Staphylococcus aureus (strain NCTC 8325 / PS 47), this protein is Protein translocase subunit SecY.